Consider the following 842-residue polypeptide: Elongation factor 2 (842 aa).

Positions 17–346 (TNVRNMSVIA…MIVLHLPSPV (330 aa)) constitute a tr-type G domain. GTP is bound by residues 26–33 (AHVDHGKS), 158–161 (NKVD), and 213–215 (SGL). The residue at position 509 (Lys-509) is an N6,N6,N6-trimethyllysine; by EFM3; alternate. Residue Lys-509 is modified to N6,N6-dimethyllysine; by EFM3; alternate. N6-methyllysine; by EFM3; alternate is present on Lys-509. Ser-579 is subject to Phosphoserine. Lys-613 is modified (N6,N6-dimethyllysine; by EFM2; alternate). N6-methyllysine; by EFM2; alternate is present on Lys-613. Residue His-699 is modified to Diphthamide. Thr-713 and Thr-763 each carry phosphothreonine. Lys-841 participates in a covalent cross-link: Glycyl lysine isopeptide (Lys-Gly) (interchain with G-Cter in ubiquitin).

This sequence belongs to the TRAFAC class translation factor GTPase superfamily. Classic translation factor GTPase family. EF-G/EF-2 subfamily. As to quaternary structure, binds to 80S ribosomes. Actively translating ribosomes show mutually exclusive binding of eIF5a (HYP2 or ANB1) and EFT1/eEF2. Interacts with the 40S ribosomal subunit protein RPL9A; the interaction is direct. Interacts with the 60S ribosomal subunit proteins RPL12A; the interaction is direct. Interacts with RPS23A; the interaction is direct. Interacts with 18S rRNA; the interaction is direct. Interacts with 25S rRNA; the interaction is direct. Interacts with RPL0. Interacts with STM1; promoting ribosome inactivation. Post-translationally, (Microbial infection) Diphthamide can be ADP-ribosylated by diphtheria toxin and by Pseudomonas exotoxin A, thus abolishing its function.

Its subcellular location is the cytoplasm. It catalyses the reaction GTP + H2O = GDP + phosphate + H(+). Its pathway is protein biosynthesis; polypeptide chain elongation. Inhibited by fusidic acid and sordarin, which prevent the release of eEF2 from the ribosome after the translocation step. While fusidic acid acts on all eukaryotic eEF2, sordarin specifically binds and inhibits only selected fungal eEF2. In terms of biological role, catalyzes the GTP-dependent ribosomal translocation step during translation elongation. During this step, the ribosome changes from the pre-translocational (PRE) to the post-translocational (POST) state as the newly formed A-site-bound peptidyl-tRNA and P-site-bound deacylated tRNA move to the P and E sites, respectively. Catalyzes the coordinated movement of the two tRNA molecules, the mRNA and conformational changes in the ribosome. The polypeptide is Elongation factor 2 (EFT1) (Saccharomyces cerevisiae (strain ATCC 204508 / S288c) (Baker's yeast)).